Consider the following 635-residue polypeptide: 1-deoxy-D-xylulose-5-phosphate synthase (635 aa).

Thiamine diphosphate contacts are provided by residues His74 and 115 to 117 (AHS). Asp146 is a binding site for Mg(2+). Thiamine diphosphate-binding positions include 147–148 (GA), Asn176, Tyr283, and Glu365. Asn176 serves as a coordination point for Mg(2+).

It belongs to the transketolase family. DXPS subfamily. As to quaternary structure, homodimer. Requires Mg(2+) as cofactor. It depends on thiamine diphosphate as a cofactor.

The catalysed reaction is D-glyceraldehyde 3-phosphate + pyruvate + H(+) = 1-deoxy-D-xylulose 5-phosphate + CO2. It participates in metabolic intermediate biosynthesis; 1-deoxy-D-xylulose 5-phosphate biosynthesis; 1-deoxy-D-xylulose 5-phosphate from D-glyceraldehyde 3-phosphate and pyruvate: step 1/1. Functionally, catalyzes the acyloin condensation reaction between C atoms 2 and 3 of pyruvate and glyceraldehyde 3-phosphate to yield 1-deoxy-D-xylulose-5-phosphate (DXP). The polypeptide is 1-deoxy-D-xylulose-5-phosphate synthase (Paraburkholderia xenovorans (strain LB400)).